A 371-amino-acid polypeptide reads, in one-letter code: Chaperone protein DnaJ (371 aa).

In terms of domain architecture, J spans 4–68 (DYYQILGVSK…QKRAAYDRFG (65 aa)). The CR-type zinc finger occupies 134–212 (GIEKNISFSS…CHGMGRYHKQ (79 aa)). Residues C147, C150, C164, C167, C186, C189, C200, and C203 each contribute to the Zn(2+) site. 4 CXXCXGXG motif repeats span residues 147–154 (CDTCHGTG), 164–171 (CDACGGVG), 186–193 (CHKCQGNG), and 200–207 (CKKCHGMG).

The protein belongs to the DnaJ family. In terms of assembly, homodimer. The cofactor is Zn(2+).

It localises to the cytoplasm. In terms of biological role, participates actively in the response to hyperosmotic and heat shock by preventing the aggregation of stress-denatured proteins and by disaggregating proteins, also in an autonomous, DnaK-independent fashion. Unfolded proteins bind initially to DnaJ; upon interaction with the DnaJ-bound protein, DnaK hydrolyzes its bound ATP, resulting in the formation of a stable complex. GrpE releases ADP from DnaK; ATP binding to DnaK triggers the release of the substrate protein, thus completing the reaction cycle. Several rounds of ATP-dependent interactions between DnaJ, DnaK and GrpE are required for fully efficient folding. Also involved, together with DnaK and GrpE, in the DNA replication of plasmids through activation of initiation proteins. The polypeptide is Chaperone protein DnaJ (Rickettsia felis (strain ATCC VR-1525 / URRWXCal2) (Rickettsia azadi)).